A 161-amino-acid polypeptide reads, in one-letter code: Nucleotide-binding protein PFLU_4927 (161 aa).

The protein belongs to the YajQ family.

In terms of biological role, nucleotide-binding protein. The sequence is that of Nucleotide-binding protein PFLU_4927 from Pseudomonas fluorescens (strain SBW25).